We begin with the raw amino-acid sequence, 89 residues long: Peroxidase (89 aa).

Heme is bound at residue H52. Positions 53 and 68 each coordinate Ca(2+).

Requires heme b as cofactor. The cofactor is Ca(2+).

The protein resides in the secreted. The enzyme catalyses 2 a phenolic donor + H2O2 = 2 a phenolic radical donor + 2 H2O. Its function is as follows. Removal of H(2)O(2), oxidation of toxic reductants, biosynthesis and degradation of lignin, suberization, auxin catabolism, response to environmental stresses such as wounding, pathogen attack and oxidative stress. These functions might be dependent on each isozyme/isoform in each plant tissue. Active against p-coumaryl alcohol, coniferyl alcohol and coniferyl aldehyde. The sequence is that of Peroxidase from Ginkgo biloba (Ginkgo).